The primary structure comprises 283 residues: Phosphatidylserine decarboxylase proenzyme (283 aa).

Catalysis depends on charge relay system; for autoendoproteolytic cleavage activity residues D89, H146, and S249. The active-site Schiff-base intermediate with substrate; via pyruvic acid; for decarboxylase activity is S249. A Pyruvic acid (Ser); by autocatalysis modification is found at S249.

Belongs to the phosphatidylserine decarboxylase family. PSD-B subfamily. Prokaryotic type I sub-subfamily. Heterodimer of a large membrane-associated beta subunit and a small pyruvoyl-containing alpha subunit. Pyruvate serves as cofactor. Is synthesized initially as an inactive proenzyme. Formation of the active enzyme involves a self-maturation process in which the active site pyruvoyl group is generated from an internal serine residue via an autocatalytic post-translational modification. Two non-identical subunits are generated from the proenzyme in this reaction, and the pyruvate is formed at the N-terminus of the alpha chain, which is derived from the carboxyl end of the proenzyme. The autoendoproteolytic cleavage occurs by a canonical serine protease mechanism, in which the side chain hydroxyl group of the serine supplies its oxygen atom to form the C-terminus of the beta chain, while the remainder of the serine residue undergoes an oxidative deamination to produce ammonia and the pyruvoyl prosthetic group on the alpha chain. During this reaction, the Ser that is part of the protease active site of the proenzyme becomes the pyruvoyl prosthetic group, which constitutes an essential element of the active site of the mature decarboxylase.

It is found in the cell membrane. The catalysed reaction is a 1,2-diacyl-sn-glycero-3-phospho-L-serine + H(+) = a 1,2-diacyl-sn-glycero-3-phosphoethanolamine + CO2. Its pathway is phospholipid metabolism; phosphatidylethanolamine biosynthesis; phosphatidylethanolamine from CDP-diacylglycerol: step 2/2. Functionally, catalyzes the formation of phosphatidylethanolamine (PtdEtn) from phosphatidylserine (PtdSer). This is Phosphatidylserine decarboxylase proenzyme from Legionella pneumophila (strain Corby).